Here is a 113-residue protein sequence, read N- to C-terminus: Nascent polypeptide-associated complex protein (113 aa).

Residues 5 to 73 (GMNPAKMKQM…AKEVPKSLEI (69 aa)) form the NAC-A/B domain.

This sequence belongs to the NAC-alpha family. As to quaternary structure, homodimer. Interacts with the ribosome. Binds ribosomal RNA.

In terms of biological role, contacts the emerging nascent chain on the ribosome. In Methanosarcina acetivorans (strain ATCC 35395 / DSM 2834 / JCM 12185 / C2A), this protein is Nascent polypeptide-associated complex protein.